The chain runs to 155 residues: 3-dehydroquinate dehydratase (155 aa).

Catalysis depends on Tyr-32, which acts as the Proton acceptor. The substrate site is built by Asn-84, His-90, and Asp-97. Catalysis depends on His-110, which acts as the Proton donor. Substrate is bound by residues Leu-111 to Ser-112 and Arg-121.

This sequence belongs to the type-II 3-dehydroquinase family. In terms of assembly, homododecamer.

It catalyses the reaction 3-dehydroquinate = 3-dehydroshikimate + H2O. The protein operates within metabolic intermediate biosynthesis; chorismate biosynthesis; chorismate from D-erythrose 4-phosphate and phosphoenolpyruvate: step 3/7. Its function is as follows. Catalyzes a trans-dehydration via an enolate intermediate. The sequence is that of 3-dehydroquinate dehydratase from Ralstonia pickettii (strain 12J).